The following is a 501-amino-acid chain: Phytoene desaturase (lycopene-forming) (501 aa).

12 to 45 (IVIGAGFGGLALAIRLQSAGIATTLVEARDKPGG) is a binding site for FAD.

It belongs to the carotenoid/retinoid oxidoreductase family. Requires FAD as cofactor.

It catalyses the reaction 15-cis-phytoene + 4 A = all-trans-lycopene + 4 AH2. It participates in carotenoid biosynthesis; astaxanthin biosynthesis. This enzyme converts phytoene into lycopene via the intermediaries of phytofluene, zeta-carotene and neurosporene by the introduction of four double bonds. This Paracoccus sp. (strain N81106 / MBIC 01143) (Agrobacterium aurantiacum) protein is Phytoene desaturase (lycopene-forming) (crtI).